A 556-amino-acid polypeptide reads, in one-letter code: U3 small nucleolar RNA-associated protein 18 homolog (556 aa).

Positions 1–24 (MPPERRRRMKLDRRTGAKPKRKPG) are enriched in basic residues. The segment at 1–70 (MPPERRRRMK…IAVAAAEEER (70 aa)) is disordered. A compositionally biased stretch (low complexity) spans 43 to 65 (APSSQRKPPARPSAAAAAIAVAA). Residue lysine 84 forms a Glycyl lysine isopeptide (Lys-Gly) (interchain with G-Cter in SUMO2) linkage. The interval 111–143 (RGPRVQEHEDSGDSEVENEAKGNFPPQKKPVWV) is disordered. A phosphoserine mark is found at serine 121 and serine 124. Residues lysine 183 and lysine 201 each participate in a glycyl lysine isopeptide (Lys-Gly) (interchain with G-Cter in SUMO2) cross-link. Residues 193 to 219 (VPAWAETTKRKTSSDDESEEDEDDLLQ) are disordered. Threonine 204 carries the phosphothreonine modification. 3 positions are modified to phosphoserine: serine 205, serine 206, and serine 210. Residues 207 to 216 (DDESEEDEDD) are compositionally biased toward acidic residues. Threonine 221 carries the phosphothreonine modification. WD repeat units lie at residues 249 to 288 (PTVA…NPKI), 293 to 333 (LERF…LIPV), 339 to 380 (LKEK…GSMK), 381 to 419 (INGR…CLNR), 421 to 462 (VDEG…QETN), and 471 to 512 (NLVT…VFSN). A Glycyl lysine isopeptide (Lys-Gly) (interchain with G-Cter in SUMO2) cross-link involves residue lysine 517.

The protein belongs to the WD repeat UTP18 family. Part of the small subunit (SSU) processome, composed of more than 70 proteins and the RNA chaperone small nucleolar RNA (snoRNA) U3.

It is found in the nucleus. The protein resides in the nucleolus. Part of the small subunit (SSU) processome, first precursor of the small eukaryotic ribosomal subunit. During the assembly of the SSU processome in the nucleolus, many ribosome biogenesis factors, an RNA chaperone and ribosomal proteins associate with the nascent pre-rRNA and work in concert to generate RNA folding, modifications, rearrangements and cleavage as well as targeted degradation of pre-ribosomal RNA by the RNA exosome. Involved in nucleolar processing of pre-18S ribosomal RNA. This is U3 small nucleolar RNA-associated protein 18 homolog from Homo sapiens (Human).